We begin with the raw amino-acid sequence, 468 residues long: Aldehyde dehydrogenase family 3 member B1 (468 aa).

Met-1 is subject to N-acetylmethionine. 188–193 (GNTYVG) contacts NAD(+). Catalysis depends on residues Glu-210 and Cys-244. 2 S-palmitoyl cysteine lipidation sites follow: Cys-462 and Cys-463. The residue at position 465 (Cys-465) is a Cysteine methyl ester. Cys-465 is lipidated: S-geranylgeranyl cysteine. Positions 466 to 468 (TLL) are cleaved as a propeptide — removed in mature form.

It belongs to the aldehyde dehydrogenase family. In terms of processing, dually lipidated in the C-terminus; prenylation occurs prior to, and is a prerequisite for palmitoylation. It is also required for activity towards long-chain substrates.

The protein localises to the cell membrane. The enzyme catalyses an aldehyde + NAD(+) + H2O = a carboxylate + NADH + 2 H(+). The catalysed reaction is a long-chain fatty aldehyde + NAD(+) + H2O = a long-chain fatty acid + NADH + 2 H(+). It carries out the reaction a medium-chain fatty aldehyde + NAD(+) + H2O = a medium-chain fatty acid + NADH + 2 H(+). It catalyses the reaction octanal + NAD(+) + H2O = octanoate + NADH + 2 H(+). The enzyme catalyses nonanal + NAD(+) + H2O = nonanoate + NADH + 2 H(+). The catalysed reaction is hexadecanoate + NADH + 2 H(+) = hexadecanal + NAD(+) + H2O. It carries out the reaction (2E)-octenal + NAD(+) + H2O = (2E)-octenoate + NADH + 2 H(+). It catalyses the reaction (E)-non-2-enal + NAD(+) + H2O = (E)-non-2-enoate + NADH + 2 H(+). The enzyme catalyses (E)-4-hydroxynon-2-enal + NAD(+) + H2O = (E)-4-hydroxynon-2-enoate + NADH + 2 H(+). The catalysed reaction is (2E)-hexadecenal + NAD(+) + H2O = (E)-hexadec-2-enoate + NADH + 2 H(+). It carries out the reaction benzaldehyde + NAD(+) + H2O = benzoate + NADH + 2 H(+). It catalyses the reaction an aldehyde + NADP(+) + H2O = a carboxylate + NADPH + 2 H(+). The enzyme catalyses a medium-chain fatty aldehyde + NADP(+) + H2O = a medium-chain fatty acid + NADPH + 2 H(+). The catalysed reaction is hexanal + NADP(+) + H2O = hexanoate + NADPH + 2 H(+). It carries out the reaction octanal + NADP(+) + H2O = octanoate + NADPH + 2 H(+). It catalyses the reaction nonanal + NADP(+) + H2O = nonanoate + NADPH + 2 H(+). The enzyme catalyses (2E)-octenal + NADP(+) + H2O = (2E)-octenoate + NADPH + 2 H(+). The catalysed reaction is (E)-non-2-enal + NADP(+) + H2O = (E)-non-2-enoate + NADPH + 2 H(+). It carries out the reaction (E)-4-hydroxynon-2-enal + NADP(+) + H2O = (E)-4-hydroxynon-2-enoate + NADPH + 2 H(+). It catalyses the reaction benzaldehyde + NADP(+) + H2O = benzoate + NADPH + 2 H(+). It participates in alcohol metabolism; ethanol degradation; acetate from ethanol: step 2/2. Its function is as follows. Oxidizes medium and long chain saturated and unsaturated fatty aldehydes generated in the plasma membrane into non-toxic fatty acids. May have a protective role against the cytotoxicity induced by lipid peroxidation. Short-chain fatty aldehydes are not good substrates. Can use both NADP(+) and NAD(+) as electron acceptor in vitro, however in vivo preference will depend on their tissue levels. Low activity towards acetaldehyde and 3,4-dihydroxyphenylacetaldehyde. Able to metabolize aromatic aldehydes such as benzaldehyde to their acid form. In Rattus norvegicus (Rat), this protein is Aldehyde dehydrogenase family 3 member B1 (Aldh3b1).